The chain runs to 494 residues: Integrin beta-like protein 1 (494 aa).

The signal sequence occupies residues 1-23 (MHPPGFKNFLLLVSSLFFIGLSA). Disulfide bonds link cysteine 40/cysteine 71, cysteine 51/cysteine 69, cysteine 63/cysteine 74, cysteine 76/cysteine 89, cysteine 91/cysteine 112, cysteine 96/cysteine 110, cysteine 104/cysteine 115, cysteine 117/cysteine 126, cysteine 132/cysteine 159, cysteine 143/cysteine 157, cysteine 151/cysteine 162, cysteine 164/cysteine 178, cysteine 180/cysteine 202, cysteine 185/cysteine 200, cysteine 194/cysteine 205, cysteine 207/cysteine 216, cysteine 220/cysteine 247, cysteine 231/cysteine 245, cysteine 239/cysteine 250, cysteine 252/cysteine 269, cysteine 271/cysteine 296, cysteine 276/cysteine 294, cysteine 288/cysteine 299, cysteine 301/cysteine 310, cysteine 316/cysteine 343, cysteine 327/cysteine 341, cysteine 335/cysteine 346, cysteine 348/cysteine 361, cysteine 363/cysteine 384, cysteine 368/cysteine 382, cysteine 376/cysteine 387, cysteine 389/cysteine 398, cysteine 404/cysteine 431, cysteine 415/cysteine 429, cysteine 423/cysteine 434, cysteine 436/cysteine 448, cysteine 450/cysteine 471, cysteine 455/cysteine 469, cysteine 463/cysteine 474, and cysteine 476/cysteine 485. 10 consecutive I-EGF domains span residues 40–90 (CRLS…PLCE), 91–127 (CHDW…EACQ), 132–179 (CDLT…KFCE), 180–217 (CDDR…DKCE), 220–270 (CDIT…DTCE), 271–311 (CDER…KKCE), 316–362 (CPLS…KTCE), 363–399 (CDDR…KLCQ), 404–449 (CNMT…EFCD), and 450–486 (CDDR…NACE). One copy of the I repeat lies at 51-95 (CRAPGQPPGSALCHDRGRCECGVCICHVTEPGTYFGPLCECHDWV). The segment at 51-494 (CRAPGQPPGS…CEIWLGTEYP (444 aa)) is cysteine-rich tandem repeats. One copy of the II repeat lies at 96–142 (CETYDGKTCAGHGTCDCGKCKCDVGWSGEACQYPTKCDLTKKISNQM). An III repeat occupies 143-184 (CKNSQDVICSNAGTCHCGRCKCDNSDGHGLIYGKFCECDDRE). Residues 185–230 (CIDDETEEICGGHGKCYCGNCYCEAGWHGDKCEFQCDITPWESKRR) form an IV repeat. A V repeat occupies 231–275 (CTSPDGKVCSNRGTCVCGECSCHDVDPTGDWGDIHGDTCECDERD). One copy of the VI repeat lies at 276–326 (CRAVYDRYSDDFCSGHGQCNCGRCDCRAGWYGKKCEHPKNCPLSAEESTRK). A VII repeat occupies 327-367 (CQGSSDLPCSGRGRCECGRCTCYPPGDSRVYGKTCECDDRR). A VIII repeat occupies 368 to 414 (CEDLDGVVCGGRGTCSCGRCVCEKGWFGKLCQHPRKCNMTEEQSRSL). A glycan (N-linked (GlcNAc...) asparagine) is linked at asparagine 405. The stretch at 415–454 (CESADGTLCSGKGSCHCGKCICSGEEWYISGEFCDCDDRD) is one IX repeat. The stretch at 455-494 (CDKHDGLICTGNGICSCGNCECWDGWNGNACEIWLGTEYP) is one X repeat.

Its subcellular location is the secreted. The polypeptide is Integrin beta-like protein 1 (Itgbl1) (Rattus norvegicus (Rat)).